We begin with the raw amino-acid sequence, 38 residues long: Photosystem II reaction center protein M (38 aa).

Residues Gly7–Ile27 traverse the membrane as a helical segment.

The protein belongs to the PsbM family. In terms of assembly, PSII is composed of 1 copy each of membrane proteins PsbA, PsbB, PsbC, PsbD, PsbE, PsbF, PsbH, PsbI, PsbJ, PsbK, PsbL, PsbM, PsbT, PsbX, PsbY, PsbZ, Psb30/Ycf12, peripheral proteins PsbO, CyanoQ (PsbQ), PsbU, PsbV and a large number of cofactors. It forms dimeric complexes.

Its subcellular location is the cellular thylakoid membrane. One of the components of the core complex of photosystem II (PSII). PSII is a light-driven water:plastoquinone oxidoreductase that uses light energy to abstract electrons from H(2)O, generating O(2) and a proton gradient subsequently used for ATP formation. It consists of a core antenna complex that captures photons, and an electron transfer chain that converts photonic excitation into a charge separation. This subunit is found at the monomer-monomer interface. This chain is Photosystem II reaction center protein M, found in Nostoc punctiforme (strain ATCC 29133 / PCC 73102).